Consider the following 251-residue polypeptide: MRRKLAAGNWKMNGTGAALDALEAIAGAHSAAAVDLLICPPATLLYRAAQVAEGSRVRIGGQDCHAVTAGAHTGDISAMMLADAGASAVILGHSERRADHGETDAQVCDKARAALEAGLIAIICIGETLAQREAGQTLDVVCAQLAGSVPDGIDGTRVVVAYEPVWAIGTGLVPTLEQIAEVHDTLRQQLIGRFGSETAEAIRLLYGGSVKPGNAAEIFAVSNVDGALVGGASLTAADFSPIVSALEQAAG.

A substrate-binding site is contributed by 9–11 (NWK). Catalysis depends on histidine 93, which acts as the Electrophile. The active-site Proton acceptor is glutamate 163. Substrate contacts are provided by residues glycine 169, serine 209, and 230-231 (GG).

It belongs to the triosephosphate isomerase family. As to quaternary structure, homodimer.

It localises to the cytoplasm. It catalyses the reaction D-glyceraldehyde 3-phosphate = dihydroxyacetone phosphate. The protein operates within carbohydrate biosynthesis; gluconeogenesis. It functions in the pathway carbohydrate degradation; glycolysis; D-glyceraldehyde 3-phosphate from glycerone phosphate: step 1/1. Functionally, involved in the gluconeogenesis. Catalyzes stereospecifically the conversion of dihydroxyacetone phosphate (DHAP) to D-glyceraldehyde-3-phosphate (G3P). The chain is Triosephosphate isomerase from Ruegeria pomeroyi (strain ATCC 700808 / DSM 15171 / DSS-3) (Silicibacter pomeroyi).